Reading from the N-terminus, the 355-residue chain is Replication-associated protein (355 aa).

The CRESS-DNA virus Rep endonuclease domain occupies Ser11 to Phe114. Positions Phe18–Tyr21 match the RCR-1 motif. 3 residues coordinate a divalent metal cation: Glu52, His60, and His62. The RCR-2 motif lies at His60–His62. Tyr100 acts as the For DNA cleavage activity in catalysis. Positions Tyr100 to Lys103 match the RCR-3 motif. Residue Glu104 participates in a divalent metal cation binding. Residues Ser119–Gly128 show a composition bias toward polar residues. The interval Ser119 to Glu138 is disordered. The span at Asn129 to Glu138 shows a compositional bias: basic and acidic residues. The segment at Ser175–Phe187 is oligomerization. Gly229–Ser236 is an ATP binding site. Residues Val252 to Pro270 are transactivation. The Nuclear localization signal motif lies at Lys292–Ser303.

It belongs to the geminiviridae Rep protein family. Homooligomer. Rep binds to repeated DNA motifs (iterons). Forms the O-complex, which is a Rep-DNA complex involved in the initiation of RCR. Part of the C- and V-complexes which are RepA-Rep-DNA complexes involved in the c-sense and v-sense transcription. Mg(2+) is required as a cofactor. Requires Mn(2+) as cofactor.

It is found in the host nucleus. Its function is as follows. Essential for the replication of viral ssDNA. The closed circular ssDNA genome is first converted to a superhelical dsDNA. Rep binds a specific region at the genome origin of replication. It introduces an endonucleolytic nick within the conserved sequence 5'-TAATATTAC-3' in the intergenic region of the genome present in all geminiviruses, thereby initiating the rolling circle replication (RCR). Following cleavage, binds covalently to the 5'-phosphate of DNA as a tyrosyl ester. The cleavage gives rise to a free 3'-OH that serves as a primer for the cellular DNA polymerase. The polymerase synthesizes the (+) strand DNA by rolling circle mechanism. After one round of replication, a Rep-catalyzed nucleotidyl transfer reaction releases a circular single-stranded virus genome, thereby terminating the replication. Displays origin-specific DNA cleavage, nucleotidyl transferase, ATPase and helicase activities. Acts as an inhibitor of C-sense gene transcription. This chain is Replication-associated protein, found in Maize streak virus genotype B (isolate Tas) (MSV).